A 183-amino-acid polypeptide reads, in one-letter code: Interleukin-24 (183 aa).

Residues Met-1 to Gly-28 form the signal peptide. A disulfide bond links Cys-36 and Cys-83. Asn-76 carries N-linked (GlcNAc...) asparagine glycosylation. Lys-99 is covalently cross-linked (Glycyl lysine isopeptide (Lys-Gly) (interchain with G-Cter in ubiquitin)).

It belongs to the IL-10 family. Glycosylated. In terms of processing, ubiquitination at Lys-99 promotes proteasomal degradation.

Its subcellular location is the secreted. In terms of biological role, multifunctional cytokine mainly produced by T-cells that plays a regulatory role in immune response, tissue homeostasis, host defense, and oncogenesis. Possesses antiviral functions and induces the type I interferon response during influenza infection. Signals through two receptor complexes IL20RA/IL20RB or IL20RB/IL22RA1. In turn, stimulates the JAK1-STAT3 and MAPK pathways and promotes the secretion of pro-inflammatory mediators including IL8 and MMP1. Intracellularly, maintains endoplasmic reticulum homeostasis by restricting the eIF2alpha-CHOP pathway-mediated stress signal. In addition, acts as a quality control mechanism for the ubiquitin proteasome system by alerting the cell to proteasome dysfunction through activation of PKR/EIF2AK2. This Rattus norvegicus (Rat) protein is Interleukin-24 (Il24).